The chain runs to 85 residues: Large ribosomal subunit protein bL31B (85 aa).

This sequence belongs to the bacterial ribosomal protein bL31 family. Type B subfamily. As to quaternary structure, part of the 50S ribosomal subunit.

In Micrococcus luteus (strain ATCC 4698 / DSM 20030 / JCM 1464 / CCM 169 / CCUG 5858 / IAM 1056 / NBRC 3333 / NCIMB 9278 / NCTC 2665 / VKM Ac-2230) (Micrococcus lysodeikticus), this protein is Large ribosomal subunit protein bL31B.